The primary structure comprises 274 residues: Copper chaperone for superoxide dismutase (274 aa).

An HMA domain is found at 11–74; the sequence is VCALEFAVQM…LLESTGRQAV (64 aa). Cu cation-binding residues include Cys22 and Cys25. Lys76 participates in a covalent cross-link: Glycyl lysine isopeptide (Lys-Gly) (interchain with G-Cter in ubiquitin). Residues 88 to 234 are superoxide dismutase-like; the sequence is AAVAILEGCG…LACGIIARSA (147 aa). A disulfide bond links Cys141 and Cys227. Zn(2+) contacts are provided by His147, His155, His164, and Asp167. Residues Lys189, Lys216, and Lys241 each participate in a glycyl lysine isopeptide (Lys-Gly) (interchain with G-Cter in ubiquitin) cross-link. Cu cation contacts are provided by Cys244 and Cys246. The residue at position 267 (Ser267) is a Phosphoserine.

In the C-terminal section; belongs to the Cu-Zn superoxide dismutase family. As to quaternary structure, homodimer, and heterodimer with SOD1. Interacts with COMMD1. Interacts with XIAP/BIRC4. Interacts with SLC31A1(via C-terminal domain); this interaction is Cu(1+)-mediated. The heterodimer CCS:SOD1 interacts with SLC31A1; this heterotrimer is Cu(1+)-mediated and its maintenance is regulated through SOD1 activation. The cofactor is Cu(2+). Zn(2+) serves as cofactor. In terms of processing, ubiquitinion by XIAP/BIRC4 leads to enhancement of its chaperone activity toward its physiologic target, SOD1, rather than proteasomal degradation. XIAP/BIRC4 preferentially ubiquitinates at Lys-241. As to expression, ubiquitous.

It localises to the cytoplasm. In terms of biological role, delivers copper to copper zinc superoxide dismutase (SOD1). In Mus musculus (Mouse), this protein is Copper chaperone for superoxide dismutase.